The sequence spans 707 residues: MPSATSHSGSGSKSSGPPPPSGSSGSEAAAGAAAPASQHPATGTGAVQTEAMKQILGVIDKKLRNLEKKKGKLDDYQERMNKGERLNQDQLDAVSKYQEVTNNLEFAKELQRSFMALSQDIQKTIKKTARREQLMREEAEQKRLKTVLELQYVLDKLGDDDVRTDLKQGLSGVPILSEEELSLLDEFYKLVDPERDMSLRLNEQYEHASIHLWDLLEGKEKPVCGTTYKALKEIVERVFQSNYFDSTHNHQNGLCEEEEAASAPTVEDQVAEAEPEPAEEYTEQSEVESTEYVNRQFMAETQFSSGEKEQVDEWTVETVEVVNSLQQQPQAASPSVPEPHSLTPVAQSDPLVRRQRVQDLMAQMQGPYNFIQDSMLDFENQTLDPAIVSAQPMNPTQNMDMPQLVCPQVHSESRLAQSNQVPVQPEATQVPLVSSTSEGYTASQPLYQPSHATEQRPQKEPMDQIQATISLNTDQTTASSSLPAASQPQVFQAGTSKPLHSSGINVNAAPFQSMQTVFNMNAPVPPANEPETLKQQSQYQATYNQSFSSQPHQVEQTELQQDQLQTVVGTYHGSQDQPHQVPGNHQQPPQQNTGFPRSSQPYYNSRGVSRGGSRGARGLMNGYRGPANGFRGGYDGYRPSFSNTPNSGYSQSQFTAPRDYSGYQRDGYQQNFKRGSGQSGPRGAPRGRGGPPRPNRGMPQMNTQQVN.

Composition is skewed to low complexity over residues 1–15 (MPSATSHSGSGSKSS) and 22–43 (GSSGSEAAAGAAAPASQHPATG). Residues 1–48 (MPSATSHSGSGSKSSGPPPPSGSSGSEAAAGAAAPASQHPATGTGAVQ) are disordered. Position 2 is an N-acetylproline (Pro2). The residue at position 10 (Ser10) is a Phosphoserine. Residues 58-92 (VIDKKLRNLEKKKGKLDDYQERMNKGERLNQDQLD) are a coiled coil. Ser113 carries the phosphoserine modification. Residues 123-151 (KTIKKTARREQLMREEAEQKRLKTVLELQ) adopt a coiled-coil conformation. Omega-N-methylarginine is present on Arg163. Residues 325-335 (LQQQPQAASPS) are compositionally biased toward low complexity. Residues 325 to 347 (LQQQPQAASPSVPEPHSLTPVAQ) are disordered. Ser333 and Ser341 each carry phosphoserine. The tract at residues 358-379 (QDLMAQMQGPYNFIQDSMLDFE) is G3BP1-binding. 3 disordered regions span residues 412–496 (ESRL…AGTS), 526–558 (PANEPETLKQQSQYQATYNQSFSSQPHQVEQTE), and 570–707 (TYHG…QQVN). Residues 431 to 452 (PLVSSTSEGYTASQPLYQPSHA) show a composition bias toward polar residues. Over residues 453-462 (TEQRPQKEPM) the composition is skewed to basic and acidic residues. The segment covering 465-474 (IQATISLNTD) has biased composition (polar residues). Low complexity predominate over residues 475 to 489 (QTTASSSLPAASQPQ). Composition is skewed to polar residues over residues 533 to 552 (LKQQSQYQATYNQSFSSQPH) and 572 to 603 (HGSQDQPHQVPGNHQQPPQQNTGFPRSSQPYY). Residue Tyr623 is modified to Phosphotyrosine. An omega-N-methylarginine mark is found at Arg624 and Arg631. Phosphotyrosine is present on residues Tyr634 and Tyr637. Arg638 is subject to Omega-N-methylarginine. Polar residues predominate over residues 640–655 (SFSNTPNSGYSQSQFT). O-linked (GlcNAc) serine glycans are attached at residues Ser642 and Ser647. A phosphotyrosine mark is found at Tyr649, Tyr660, Tyr663, and Tyr668. 2 stretches are compositionally biased toward low complexity: residues 674-684 (RGSGQSGPRGA) and 695-707 (NRGMPQMNTQQVN). Asymmetric dimethylarginine; alternate is present on Arg696. Arg696 bears the Omega-N-methylarginine; alternate mark.

The protein belongs to the caprin family. As to quaternary structure, may form homomultimers. Interacts with G3BP1; interaction is direct and promotes stress granule formation. Interacts with G3BP2; interaction is direct and promotes stress granule formation. Interacts with PQBP1. Interacts with DDX3X. Interacts (when phosphorylated by EPHA4) with FMR1; interaction with FMR1 promotes formation of a membraneless compartment. In terms of processing, tyrosine phosphorylation by EPHA4 promotes interaction with FMR1 and liquid-liquid phase separation (LLPS) for the formation of a membraneless compartment that concentrates mRNAs with associated regulatory factors. Post-translationally, O-glycosylated (O-GlcNAcylated), in a cell cycle-dependent manner. O-glycosylation by OGT inhibit ability to undergo liquid-liquid phase separation (LLPS). As to expression, highest expression in thymus, spleen and brain (at protein level). Lower levels in kidney, muscle and liver (at protein level).

Its subcellular location is the cytoplasm. It is found in the cytoplasmic ribonucleoprotein granule. It localises to the cytosol. The protein resides in the cell projection. The protein localises to the dendrite. Its subcellular location is the lamellipodium. With respect to regulation, ability to mediate liquid-liquid phase separation is regulated by ATP: moderate concentrations of ATP enhance phase separation, whereas high concentrations of ATP lead to inhibition of phase separation. In terms of biological role, mRNA-binding protein that acts as a regulator of mRNAs transport, translation and/or stability, and which is involved in neurogenesis, synaptic plasticity in neurons and cell proliferation and migration in multiple cell types. Plays an essential role in cytoplasmic stress granule formation. Acts as an mRNA regulator by mediating formation of some phase-separated membraneless compartment: undergoes liquid-liquid phase separation upon binding to target mRNAs, leading to assemble mRNAs into cytoplasmic ribonucleoprotein granules that concentrate mRNAs with associated regulatory factors. Undergoes liquid-liquid phase separation following phosphorylation and interaction with FMR1, promoting formation of cytoplasmic ribonucleoprotein granules that concentrate mRNAs with factors that inhibit translation and mediate deadenylation of target mRNAs. In these cytoplasmic ribonucleoprotein granules, CAPRIN1 mediates recruitment of CNOT7 deadenylase, leading to mRNA deadenylation and degradation. Binds directly and selectively to MYC and CCND2 mRNAs. In neuronal cells, directly binds to several mRNAs associated with RNA granules, including BDNF, CAMK2A, CREB1, MAP2, NTRK2 mRNAs, as well as to GRIN1 and KPNB1 mRNAs, but not to rRNAs. In Mus musculus (Mouse), this protein is Caprin-1 (Caprin1).